The primary structure comprises 314 residues: Ribosomal RNA small subunit methyltransferase H (314 aa).

S-adenosyl-L-methionine is bound by residues 35–37 (GGH), Asp55, Phe79, Asp101, and Gln108.

This sequence belongs to the methyltransferase superfamily. RsmH family.

It is found in the cytoplasm. It carries out the reaction cytidine(1402) in 16S rRNA + S-adenosyl-L-methionine = N(4)-methylcytidine(1402) in 16S rRNA + S-adenosyl-L-homocysteine + H(+). Its function is as follows. Specifically methylates the N4 position of cytidine in position 1402 (C1402) of 16S rRNA. The chain is Ribosomal RNA small subunit methyltransferase H from Pectobacterium carotovorum subsp. carotovorum (strain PC1).